We begin with the raw amino-acid sequence, 159 residues long: RNA pyrophosphohydrolase (159 aa).

The 144-residue stretch at 6–149 (GYRPNVGIVI…KRNVYRRMMK (144 aa)) folds into the Nudix hydrolase domain. The short motif at 38-59 (GGINSGETAEQAMFRELFEEVG) is the Nudix box element.

It belongs to the Nudix hydrolase family. RppH subfamily. A divalent metal cation is required as a cofactor.

Accelerates the degradation of transcripts by removing pyrophosphate from the 5'-end of triphosphorylated RNA, leading to a more labile monophosphorylated state that can stimulate subsequent ribonuclease cleavage. This Baumannia cicadellinicola subsp. Homalodisca coagulata protein is RNA pyrophosphohydrolase.